The primary structure comprises 374 residues: Potassium channel subfamily K member 9 (374 aa).

Topologically, residues 1-8 are cytoplasmic; that stretch reads MKRQNVRT. Residues 9-29 form a helical membrane-spanning segment; the sequence is LSLIVCTFTYLLVGAAVFDAL. Topologically, residues 30–88 are extracellular; that stretch reads ESDHEMREEEKLKAEEIRIKGKYNISSEDYRQLELVILQSEPHRAGVQWKFAGSFYFAI. N-linked (GlcNAc...) asparagine glycosylation occurs at asparagine 53. Positions 89–101 form an intramembrane region, pore-forming; the sequence is TVITTIGYGHAAP. K(+) contacts are provided by threonine 93, isoleucine 94, glycine 95, and tyrosine 96. A selectivity filter 1 region spans residues 93–98; that stretch reads TIGYGH. Over 102-107 the chain is Extracellular; that stretch reads GTDAGK. Residues 108–128 traverse the membrane as a helical segment; it reads AFCMFYAVLGIPLTLVMFQSL. Residues 129 to 158 lie on the Cytoplasmic side of the membrane; it reads GERMNTFVRYLLKRIKKCCGMRNTDVSMEN. The helical transmembrane segment at 159-179 threads the bilayer; it reads MVTVGFFSCMGTLCIGAAAFS. The Extracellular portion of the chain corresponds to 180–194; sequence QCEEWSFFHAYYYCF. Residues 195–207 constitute an intramembrane region (pore-forming); the sequence is ITLTTIGFGDYVA. The K(+) site is built by threonine 199, isoleucine 200, glycine 201, and phenylalanine 202. Residues 199–204 are selectivity filter 2; the sequence is TIGFGD. Residues 208–218 lie on the Extracellular side of the membrane; that stretch reads LQTKGALQKKP. The helical transmembrane segment at 219-239 threads the bilayer; that stretch reads LYVAFSFMYILVGLTVIGAFL. Over 240 to 374 the chain is Cytoplasmic; sequence NLVVLRFLTM…QRLMKRRKSV (135 aa). Residues 243–248 form an X-gate region; sequence VLRFLT.

Belongs to the two pore domain potassium channel (TC 1.A.1.8) family. In terms of assembly, homodimer. Heterodimer with KCNK1. Heterodimer with KCNK3. As to expression, mainly found in the cerebellum. Also found in adrenal gland, kidney and lung.

The protein resides in the cell membrane. It localises to the mitochondrion inner membrane. The protein localises to the cell projection. It is found in the dendrite. It catalyses the reaction K(+)(in) = K(+)(out). It carries out the reaction Na(+)(in) = Na(+)(out). Its activity is regulated as follows. Inhibited by extracellular acidification adopting a nonconductive conformation at pH 6.0. Inhibited by phorbol 12-myristate 13-acetate (PMA). Its function is as follows. K(+) channel that conducts voltage-dependent outward rectifying currents upon membrane depolarization. Voltage sensing is coupled to K(+) electrochemical gradient in an 'ion flux gating' mode where outward but not inward ion flow opens the gate. Changes ion selectivity and becomes permeable to Na(+) ions in response to extracellular acidification. Protonation of the pH sensor His-98 stabilizes C-type inactivation conformation likely converting the channel from outward K(+)-conducting, to inward Na(+)-conducting to nonconductive state. Homo- and heterodimerizes to form functional channels with distinct regulatory and gating properties. Allows K(+) currents with fast-gating kinetics important for the repolarization and hyperpolarization phases of action potentials. In granule neurons, hyperpolarizes the resting membrane potential to limit intrinsic neuronal excitability, but once the action potential threshold is reached, supports high-frequency action potential firing and increased neuronal excitability. Homomeric and/or heteromeric KCNK3:KCNK9 channels operate in cerebellar granule cells, whereas heteromeric KCNK1:KCNK9 enables currents in hippocampal dentate gyrus granule neurons. Dispensable for central chemosensory respiration i.e. breathing controlled by brainstem CO2/pH, it rather conducts pH-sensitive currents and controls the firing rate of serotonergic raphe neurons involved in potentiation of the respiratory chemoreflex. In retinal ganglion cells, mediates outward currents that regulate action potentials in response to acidification of the synaptic cleft. Involved in transmission of image-forming and nonimage-forming visual information in the retina. In adrenal gland, contributes to the maintenance of a hyperpolarized resting membrane potential of aldosterone-producing cells at zona glomerulosa and limits aldosterone release as part of a regulatory mechanism that controls arterial blood pressure and electrolyte homeostasis. This Homo sapiens (Human) protein is Potassium channel subfamily K member 9.